The primary structure comprises 446 residues: Phosphoglucosamine mutase (446 aa).

Catalysis depends on serine 100, which acts as the Phosphoserine intermediate. The Mg(2+) site is built by serine 100, aspartate 241, aspartate 243, and aspartate 245. Serine 100 is subject to Phosphoserine.

It belongs to the phosphohexose mutase family. Mg(2+) serves as cofactor. In terms of processing, activated by phosphorylation.

It catalyses the reaction alpha-D-glucosamine 1-phosphate = D-glucosamine 6-phosphate. Its function is as follows. Catalyzes the conversion of glucosamine-6-phosphate to glucosamine-1-phosphate. The polypeptide is Phosphoglucosamine mutase (Methylobacterium sp. (strain 4-46)).